Consider the following 459-residue polypeptide: Putrescine aminotransferase (459 aa).

Pyridoxal 5'-phosphate is bound by residues 150 to 151 (GT) and Gln274. Position 300 is an N6-(pyridoxal phosphate)lysine (Lys300). Thr332 contacts pyridoxal 5'-phosphate.

This sequence belongs to the class-III pyridoxal-phosphate-dependent aminotransferase family. Putrescine aminotransferase subfamily. Requires pyridoxal 5'-phosphate as cofactor.

The enzyme catalyses an alkane-alpha,omega-diamine + 2-oxoglutarate = an omega-aminoaldehyde + L-glutamate. It catalyses the reaction putrescine + 2-oxoglutarate = 1-pyrroline + L-glutamate + H2O. The catalysed reaction is cadaverine + 2-oxoglutarate = 5-aminopentanal + L-glutamate. It functions in the pathway amine and polyamine degradation; putrescine degradation; 4-aminobutanal from putrescine (transaminase route): step 1/1. Functionally, catalyzes the aminotransferase reaction from putrescine to 2-oxoglutarate, leading to glutamate and 4-aminobutanal, which spontaneously cyclizes to form 1-pyrroline. This is the first step in one of two pathways for putrescine degradation, where putrescine is converted into 4-aminobutanoate (gamma-aminobutyrate or GABA) via 4-aminobutanal. Also functions as a cadaverine transaminase in a a L-lysine degradation pathway to succinate that proceeds via cadaverine, glutarate and L-2-hydroxyglutarate. The polypeptide is Putrescine aminotransferase (Escherichia coli O81 (strain ED1a)).